Consider the following 122-residue polypeptide: Large ribosomal subunit protein uL14 (122 aa).

Belongs to the universal ribosomal protein uL14 family. In terms of assembly, part of the 50S ribosomal subunit. Forms a cluster with proteins L3 and L19. In the 70S ribosome, L14 and L19 interact and together make contacts with the 16S rRNA in bridges B5 and B8.

Its function is as follows. Binds to 23S rRNA. Forms part of two intersubunit bridges in the 70S ribosome. The polypeptide is Large ribosomal subunit protein uL14 (Bacillus subtilis (strain 168)).